A 537-amino-acid chain; its full sequence is CTP synthase (537 aa).

Residues 1-268 (MSTKYIFVTG…DQIVCDHLKL (268 aa)) are amidoligase domain. Residue Ser-14 coordinates CTP. Ser-14 is a UTP binding site. 15–20 (SIGKGI) is an ATP binding site. An L-glutamine-binding site is contributed by Tyr-55. Position 72 (Asp-72) interacts with ATP. Residues Asp-72 and Glu-142 each contribute to the Mg(2+) site. CTP is bound by residues 149-151 (DIE), 189-194 (KTKPTQ), and Lys-225. Residues 189–194 (KTKPTQ) and Lys-225 each bind UTP. A Glutamine amidotransferase type-1 domain is found at 293 to 536 (RIALVGKYVE…VTAAVEKSSD (244 aa)). Gly-355 is a binding site for L-glutamine. The active-site Nucleophile; for glutamine hydrolysis is the Cys-382. Residues 383 to 386 (LGMQ), Glu-406, and Arg-464 contribute to the L-glutamine site. Residues His-509 and Glu-511 contribute to the active site.

This sequence belongs to the CTP synthase family. Homotetramer.

It catalyses the reaction UTP + L-glutamine + ATP + H2O = CTP + L-glutamate + ADP + phosphate + 2 H(+). The enzyme catalyses L-glutamine + H2O = L-glutamate + NH4(+). The catalysed reaction is UTP + NH4(+) + ATP = CTP + ADP + phosphate + 2 H(+). Its pathway is pyrimidine metabolism; CTP biosynthesis via de novo pathway; CTP from UDP: step 2/2. Allosterically activated by GTP, when glutamine is the substrate; GTP has no effect on the reaction when ammonia is the substrate. The allosteric effector GTP functions by stabilizing the protein conformation that binds the tetrahedral intermediate(s) formed during glutamine hydrolysis. Inhibited by the product CTP, via allosteric rather than competitive inhibition. Catalyzes the ATP-dependent amination of UTP to CTP with either L-glutamine or ammonia as the source of nitrogen. Regulates intracellular CTP levels through interactions with the four ribonucleotide triphosphates. This Streptococcus sanguinis (strain SK36) protein is CTP synthase.